We begin with the raw amino-acid sequence, 481 residues long: Aspartyl/glutamyl-tRNA(Asn/Gln) amidotransferase subunit B (481 aa).

Belongs to the GatB/GatE family. GatB subfamily. As to quaternary structure, heterotrimer of A, B and C subunits.

The enzyme catalyses L-glutamyl-tRNA(Gln) + L-glutamine + ATP + H2O = L-glutaminyl-tRNA(Gln) + L-glutamate + ADP + phosphate + H(+). It carries out the reaction L-aspartyl-tRNA(Asn) + L-glutamine + ATP + H2O = L-asparaginyl-tRNA(Asn) + L-glutamate + ADP + phosphate + 2 H(+). Functionally, allows the formation of correctly charged Asn-tRNA(Asn) or Gln-tRNA(Gln) through the transamidation of misacylated Asp-tRNA(Asn) or Glu-tRNA(Gln) in organisms which lack either or both of asparaginyl-tRNA or glutaminyl-tRNA synthetases. The reaction takes place in the presence of glutamine and ATP through an activated phospho-Asp-tRNA(Asn) or phospho-Glu-tRNA(Gln). In Carboxydothermus hydrogenoformans (strain ATCC BAA-161 / DSM 6008 / Z-2901), this protein is Aspartyl/glutamyl-tRNA(Asn/Gln) amidotransferase subunit B.